The sequence spans 246 residues: Serine protease 1 (246 aa).

Residues Met-1 to Pro-17 form the signal peptide. A propeptide spans Val-18–Lys-23 (activation peptide). Residues Ile-24–Ala-244 form the Peptidase S1 domain. 6 cysteine pairs are disulfide-bonded: Cys-30/Cys-160, Cys-48/Cys-64, Cys-132/Cys-233, Cys-139/Cys-206, Cys-171/Cys-185, and Cys-196/Cys-220. His-63 functions as the Charge relay system in the catalytic mechanism. Ca(2+) is bound by residues Glu-75, Asn-77, Val-80, and Glu-85. Asp-107 serves as the catalytic Charge relay system. Substrate-binding positions include Asp-194–Ser-195, Gln-197–Gly-198, and Ser-200. The active-site Charge relay system is Ser-200.

Belongs to the peptidase S1 family. Interacts with SERPINA1. Requires Ca(2+) as cofactor. Post-translationally, autocatalytic cleavage after Lys-23 leads to beta-trypsin by releasing a terminal hexapeptide. Subsequent cleavage after Lys-148 leads to alpha-trypsin. Further cleavage after Lys-193 yields pseudotrypsin. A cleavage may also occur after Arg-122. Not sulfated on tyrosine residue(s). As to expression, synthesized in the acinar cells of the pancreas.

It localises to the secreted. Its subcellular location is the extracellular space. The enzyme catalyses Preferential cleavage: Arg-|-Xaa, Lys-|-Xaa.. Its activity is regulated as follows. Is inhibited by scorpion cyclotide trypsin inhibitor TopI1. The sequence is that of Serine protease 1 (PRSS1) from Bos taurus (Bovine).